We begin with the raw amino-acid sequence, 484 residues long: MAKITSNTVSQLLSAVGGSSNVSKCGNCMTRLRLSLANNGLADQSVIKKIPGVMGVVESDEQFQIILGPGKAQQAAEMMNQLIDSLTSGDSEEPDMPQQDLSAVAAEQKKQMKSKQTSAVQRFLSKFATIFTPLIPGFIAAGLLLGFATLLEQMFVLDQTPSQFMLDLIAYMKVFGKGLFAFLSILIGYNAQQAFGGSGVNGAILASLFVLGYNPEATSGIYSGMNEFFGFAIDPRGNIIGVLLAAIIGAQVERKVRQYMPDDLDMILTSVITLLIMGAVTFLIIMPIGGELFKGMSWLFLNLNDNPLGAAILAGLFLISVVFGIHQGFVPVYFALMEAQGFNSLFPILAMAGGGQVGASMALYFKAKKDALLRTQVKGAIIPGLLGIGEPLIYGVTLPRVKPFVTACIGGAAGGFFIGLVSYLGLPVGLNTVFGPSGIVAIPLMTSENGIFPGMMVFVAGLLISYIVGFLATYFFGCKDVDLS.

Residues 1–89 (MAKITSNTVS…NQLIDSLTSG (89 aa)) enclose the PTS EIIB type-1 domain. Cys-28 (phosphocysteine intermediate; for EIIB activity) is an active-site residue. Residues 125-484 (SKFATIFTPL…FFGCKDVDLS (360 aa)) form the PTS EIIC type-1 domain. The next 10 helical transmembrane spans lie at 127-147 (FATI…LLGF), 168-188 (LIAY…ILIG), 194-214 (AFGG…LGYN), 228-248 (FFGF…AAII), 266-286 (MILT…LIIM), 310-330 (AAIL…QGFV), 345-365 (LFPI…ALYF), 379-399 (GAII…VTLP), 409-429 (IGGA…LPVG), and 451-471 (IFPG…VGFL).

The protein resides in the cell inner membrane. The catalysed reaction is N-acetyl-beta-D-muramate(out) + N(pros)-phospho-L-histidyl-[protein] = N-acetyl-beta-D-muramate 6-phosphate(in) + L-histidyl-[protein]. The phosphoenolpyruvate-dependent sugar phosphotransferase system (sugar PTS), a major carbohydrate active transport system, catalyzes the phosphorylation of incoming sugar substrates concomitantly with their translocation across the cell membrane. This system is involved in N-acetylmuramic acid (MurNAc) transport, yielding cytoplasmic MurNAc-6-P. Is also able to take up anhydro-N-acetylmuramic acid (anhMurNAc), but cannot phosphorylate the carbon 6, probably because of the 1,6-anhydro ring. The sequence is that of PTS system N-acetylmuramic acid-specific EIIBC component (murP) from Vibrio parahaemolyticus serotype O3:K6 (strain RIMD 2210633).